The following is a 442-amino-acid chain: MYRNDVKEISMEQTKIILDENEMPKKWYNVLADLPSPIDPPLDPRTWQPISPDALEPIFPKALIMQEMSSDRYIDIPEEVLDVYRLWRPSPLFRAHQLEKVLKSPAKIYYKYEGVSPAGSHKTNTSIAQAYYNMKEGTERLTTETGAGQWGSALSLACNYFDLECKVYMVRSSFYQKPYRKSLITLWGGNVVPSPSPDTEFGRKILQEQPDTPGSLGIAISEAVEDAIAHENTKYSLGSVLNHVVLHQTVIGAECKQQLAQVEEYPDVVIGCCGGGSNLGGIGLEFIKDRLEGKHSARVVAVEPSACPSLTKGEYRYDFGDTAEMTPLLKMYTLGHKHVPPAIHAGGLRYHGDSPIISKLCSEGLMEAVSYDQQEVFDAAVQFARTEGIVPAPESSHAIRCAIDEALAAKQTGEEKTILFNLSGHGHFDMSSYDKYFSGELM.

N6-(pyridoxal phosphate)lysine is present on Lys-122.

This sequence belongs to the TrpB family. In terms of assembly, tetramer of two alpha and two beta chains. Pyridoxal 5'-phosphate is required as a cofactor.

It carries out the reaction (1S,2R)-1-C-(indol-3-yl)glycerol 3-phosphate + L-serine = D-glyceraldehyde 3-phosphate + L-tryptophan + H2O. Its pathway is amino-acid biosynthesis; L-tryptophan biosynthesis; L-tryptophan from chorismate: step 5/5. The beta subunit is responsible for the synthesis of L-tryptophan from indole and L-serine. This Methanosarcina acetivorans (strain ATCC 35395 / DSM 2834 / JCM 12185 / C2A) protein is Tryptophan synthase beta chain 2 (trpB2).